Reading from the N-terminus, the 455-residue chain is F-box/FBD/LRR-repeat protein At3g51530 (455 aa).

A disordered region spans residues 1 to 26 (MKNSERFSAAKPLMEQGGKSSRKPGF). Positions 29–75 (EDRISELPEVLLLQILSSLPTKLVISTSVLSKRWLSLWKMVQRLEFE) constitute an F-box domain. 6 LRR repeats span residues 80-106 (IYDFAENVTRSLLSHKAPVLESLHLKV), 155-182 (ETLKLDYVYIYVPCPVSMKSLRTLHLLS), 183-208 (VVYKGDESGHNLFASCPNLEHLVLRR), 227-257 (TLLLSDPFSARESSRGYVIKAPSLKYLGIES), 277-302 (IRNVSKIVNENILGSLKSAKRLSLDL), and 325-351 (THKVEWWNLLTHMLDSSPKLQVLKLID). The region spanning 370–417 (KWNQPKYVPECLETFMWRNCNWGREEEKEVATYILRNARQLKKATFST) is the FBD domain.

The chain is F-box/FBD/LRR-repeat protein At3g51530 from Arabidopsis thaliana (Mouse-ear cress).